The primary structure comprises 66 residues: Large ribosomal subunit protein bL33c (66 aa).

The protein belongs to the bacterial ribosomal protein bL33 family.

It is found in the plastid. It localises to the chloroplast. In Vitis vinifera (Grape), this protein is Large ribosomal subunit protein bL33c.